The chain runs to 373 residues: Anhydro-N-acetylmuramic acid kinase (373 aa).

12-19 (GTSLDGVD) lines the ATP pocket.

It belongs to the anhydro-N-acetylmuramic acid kinase family.

It carries out the reaction 1,6-anhydro-N-acetyl-beta-muramate + ATP + H2O = N-acetyl-D-muramate 6-phosphate + ADP + H(+). The protein operates within amino-sugar metabolism; 1,6-anhydro-N-acetylmuramate degradation. It participates in cell wall biogenesis; peptidoglycan recycling. In terms of biological role, catalyzes the specific phosphorylation of 1,6-anhydro-N-acetylmuramic acid (anhMurNAc) with the simultaneous cleavage of the 1,6-anhydro ring, generating MurNAc-6-P. Is required for the utilization of anhMurNAc either imported from the medium or derived from its own cell wall murein, and thus plays a role in cell wall recycling. In Salmonella dublin (strain CT_02021853), this protein is Anhydro-N-acetylmuramic acid kinase.